Here is an 801-residue protein sequence, read N- to C-terminus: Xaa-Pro dipeptidyl-peptidase (801 aa).

Catalysis depends on charge relay system residues Ser371, Asp491, and His522.

The protein belongs to the peptidase S15 family. Homodimer.

Its subcellular location is the cytoplasm. It carries out the reaction Hydrolyzes Xaa-Pro-|- bonds to release unblocked, N-terminal dipeptides from substrates including Ala-Pro-|-p-nitroanilide and (sequentially) Tyr-Pro-|-Phe-Pro-|-Gly-Pro-|-Ile.. In terms of biological role, removes N-terminal dipeptides sequentially from polypeptides having unsubstituted N-termini provided that the penultimate residue is proline. This chain is Xaa-Pro dipeptidyl-peptidase, found in Ligilactobacillus salivarius (strain UCC118) (Lactobacillus salivarius).